The chain runs to 168 residues: Crossover junction endodeoxyribonuclease RuvC (168 aa).

Active-site residues include aspartate 9, glutamate 70, and aspartate 145. Residues aspartate 9, glutamate 70, and aspartate 145 each coordinate Mg(2+).

The protein belongs to the RuvC family. In terms of assembly, homodimer which binds Holliday junction (HJ) DNA. The HJ becomes 2-fold symmetrical on binding to RuvC with unstacked arms; it has a different conformation from HJ DNA in complex with RuvA. In the full resolvosome a probable DNA-RuvA(4)-RuvB(12)-RuvC(2) complex forms which resolves the HJ. Mg(2+) is required as a cofactor.

It is found in the cytoplasm. It catalyses the reaction Endonucleolytic cleavage at a junction such as a reciprocal single-stranded crossover between two homologous DNA duplexes (Holliday junction).. In terms of biological role, the RuvA-RuvB-RuvC complex processes Holliday junction (HJ) DNA during genetic recombination and DNA repair. Endonuclease that resolves HJ intermediates. Cleaves cruciform DNA by making single-stranded nicks across the HJ at symmetrical positions within the homologous arms, yielding a 5'-phosphate and a 3'-hydroxyl group; requires a central core of homology in the junction. The consensus cleavage sequence is 5'-(A/T)TT(C/G)-3'. Cleavage occurs on the 3'-side of the TT dinucleotide at the point of strand exchange. HJ branch migration catalyzed by RuvA-RuvB allows RuvC to scan DNA until it finds its consensus sequence, where it cleaves and resolves the cruciform DNA. This is Crossover junction endodeoxyribonuclease RuvC from Chlamydia caviae (strain ATCC VR-813 / DSM 19441 / 03DC25 / GPIC) (Chlamydophila caviae).